The sequence spans 177 residues: Probable prophage lysozyme (177 aa).

Residue Glu-35 is the Proton donor of the active site. Asp-44 functions as the Nucleophile in the catalytic mechanism.

Belongs to the glycosyl hydrolase 24 family.

The enzyme catalyses Hydrolysis of (1-&gt;4)-beta-linkages between N-acetylmuramic acid and N-acetyl-D-glucosamine residues in a peptidoglycan and between N-acetyl-D-glucosamine residues in chitodextrins.. In terms of biological role, essential for lysis of bacterial cell wall, by showing cell wall hydrolyzing activity. In Escherichia coli (strain K12), this protein is Probable prophage lysozyme (rrrQ).